A 268-amino-acid chain; its full sequence is MADS-box protein FBP24 (268 aa).

Residues 4-64 form the MADS-box domain; that stretch reads MGRGKIEVKR…GKLFEYCSQP (61 aa). The region spanning 88-178 is the K-box domain; that stretch reads RVQLYDEVAK…YQWLMNNQMY (91 aa). Residues 243-268 are disordered; the sequence is NSISPYRLQPSHPNLQDSHVHGPSYD.

The protein localises to the nucleus. Probable transcription factor. This chain is MADS-box protein FBP24 (FBP24), found in Petunia hybrida (Petunia).